We begin with the raw amino-acid sequence, 169 residues long: Shikimate kinase (169 aa).

Residue 13-18 (GAGKST) participates in ATP binding. S17 contacts Mg(2+). Residues D35, R59, and G80 each contribute to the substrate site. R117 contacts ATP. Residue R136 coordinates substrate. R153 contributes to the ATP binding site.

This sequence belongs to the shikimate kinase family. In terms of assembly, monomer. The cofactor is Mg(2+).

The protein localises to the cytoplasm. It carries out the reaction shikimate + ATP = 3-phosphoshikimate + ADP + H(+). It functions in the pathway metabolic intermediate biosynthesis; chorismate biosynthesis; chorismate from D-erythrose 4-phosphate and phosphoenolpyruvate: step 5/7. Its function is as follows. Catalyzes the specific phosphorylation of the 3-hydroxyl group of shikimic acid using ATP as a cosubstrate. This is Shikimate kinase from Corynebacterium glutamicum (strain ATCC 13032 / DSM 20300 / JCM 1318 / BCRC 11384 / CCUG 27702 / LMG 3730 / NBRC 12168 / NCIMB 10025 / NRRL B-2784 / 534).